Reading from the N-terminus, the 475-residue chain is BTB/POZ domain-containing protein 10 (475 aa).

The disordered stretch occupies residues 1-143 (MAGRPHPYDG…SSQSSSDGSC (143 aa)). A compositionally biased stretch (basic residues) spans 22 to 31 (LHSRPRKLYK). Residues 57–80 (GHERSRDRRRSSDRSRDSSHERTE) are compositionally biased toward basic and acidic residues. Positions 81 to 94 (SQLTPCIRNVTSPT) are enriched in polar residues. A compositionally biased stretch (basic and acidic residues) spans 97–107 (HHVEREKDHSS). Positions 108–142 (SRPSSPRPQKASPNGSISSAGNSSRNSSQSSSDGS) are enriched in low complexity. Positions 146 to 475 (AGEMVFVYEN…LDPDAQNPTL (330 aa)) are interaction with AKT family members. One can recognise a BTB domain in the interval 167 to 241 (ERVTLIVDNT…YKTGIIRCPD (75 aa)). The tract at residues 456–475 (PIHPPSGNSDLDPDAQNPTL) is disordered.

In terms of assembly, interacts (via C-terminal 330-amino-acid region) with AKT1; AKT2 and AKT3. Interacts with PPP2CA and PPP1CA.

The protein resides in the nucleus. It is found in the cytoplasm. In terms of biological role, plays a major role as an activator of AKT family members by inhibiting PPP2CA-mediated dephosphorylation, thereby keeping AKTs activated. Plays a role in preventing motor neuronal death and in accelerating the growth of pancreatic beta cells. This chain is BTB/POZ domain-containing protein 10 (BTBD10), found in Pongo abelii (Sumatran orangutan).